The following is a 398-amino-acid chain: MTITSTNIIEETNYYGAHNYHPLPIVVSEANGVWVKDPEGNSYMDMLSAYSAVNQGHRHPKIIEALKNQADKVTLTSRAFHNELLGPWTKRMAKLTKKDKVLPMNTGVEAVETAIKAARRWAYQVKGVTENQAEIIAADGNFHGRTLNAISLSNDPDATKNYGPFVPGINKVSYGDINAIEKAITENTAAIILEPIQGEAGIIIPPEGYLKKVRELCSEKNILFIADEVQTGFARTGKMFACEWENVEPDIYVMGKALGGGVFPVSAIAANNEIMDVFTPGSHGSTFGGNPLACAVSMAAIDVIEEENLVNKSLESGKYFADKLRAVNFEGIKEVRARGLFIGMEFHQPVREICEKLKDKGILCKETHVNTIRFAPPLVITKDEMDWAIQRIEEVLTN.

Lys256 carries the post-translational modification N6-(pyridoxal phosphate)lysine.

Belongs to the class-III pyridoxal-phosphate-dependent aminotransferase family. OAT subfamily. The cofactor is pyridoxal 5'-phosphate.

It localises to the cytoplasm. It catalyses the reaction a 2-oxocarboxylate + L-ornithine = L-glutamate 5-semialdehyde + an L-alpha-amino acid. It participates in amino-acid biosynthesis; L-proline biosynthesis; L-glutamate 5-semialdehyde from L-ornithine: step 1/1. Its function is as follows. Catalyzes the interconversion of ornithine to glutamate semialdehyde. This is Ornithine aminotransferase from Oceanobacillus iheyensis (strain DSM 14371 / CIP 107618 / JCM 11309 / KCTC 3954 / HTE831).